A 470-amino-acid chain; its full sequence is Annexin C1 (470 aa).

The interval 1–143 (MYGQQNNYGA…QGQSPMMYLG (143 aa)) is disordered. Residues 15 to 34 (QWGQAPPQGYQPGYQNGPPA) are compositionally biased toward low complexity. The segment covering 82–92 (PQPPFGAPSPA) has biased composition (pro residues). 2 stretches are compositionally biased toward low complexity: residues 93–110 (PAGYGAPPTAPQGQYGAP) and 128–138 (GYGSQPQGQSP). Annexin repeat units follow at residues 161 to 232 (YDAR…LLSL), 233 to 304 (GPLG…MALS), 316 to 388 (QLVQ…FIAR), and 395 to 468 (DGVV…GIIE).

The protein belongs to the annexin family.

Its function is as follows. Does not appear to play a major role in virulence. May play a role in titan cell formation. This chain is Annexin C1, found in Cryptococcus neoformans var. grubii serotype A (strain H99 / ATCC 208821 / CBS 10515 / FGSC 9487) (Filobasidiella neoformans var. grubii).